A 641-amino-acid polypeptide reads, in one-letter code: Protein BCAP (641 aa).

Coiled coils occupy residues 83–144 (HWPV…KQND), 191–270 (EKDN…RKLE), 299–375 (QKQK…EREQ), and 487–599 (FKLE…TLNA).

Belongs to the ODF2 family.

It is found in the cytoplasm. The protein localises to the cytoskeleton. The protein resides in the microtubule organizing center. It localises to the centrosome. Its subcellular location is the centriole. It is found in the centriolar satellite. The protein localises to the cilium basal body. In terms of biological role, acts as a suppressor of ciliogenesis, specifically, the initiation of ciliogenesis. The sequence is that of Protein BCAP (odf2l) from Xenopus laevis (African clawed frog).